The chain runs to 355 residues: MNTTPVHALTDIDGGIAVDPAPRLAGPPVFGGPGNDAFDLAPVRSTGREMLRFDFPGVSIGAAHYEEGPTGATVIHIPAGARTAVDARGGAVGLSGGYDFNHAICLAGGAGYGLEAGAGVSDALLERLEHRTGFAELQLVSSAVIYDFSARSTAVYPDKALGRAALEFAVPGEFPQGRAGAGMSASAGKVDWDRTEITGQGAAFRRLGDVRILAVVVPNPVGVIVDRAGTVVRGNYDAQTGVRRHPVFDYQEAFAEQVPPVTEAGNTTISAIVTNVRMSPVELNQFAKQVHSSMHRGIQPFHTDMDGDTLFAVTTDEIDLPTTPGSSRGRLSVNATALGAIASEVMWDAVLEAGK.

Residue Thr267 is the Nucleophile of the active site.

Belongs to the peptidase S58 family. As to quaternary structure, heterotetramer composed of 4 alpha/beta heterodimers. Exists at the monomer/dimer/trimer equilibrium in aqueous solution. Expressed as an inactive precursor that is cleaved autocatalytically at Asn266/Thr267 to generate an active enzyme composed of an alpha subunit and a beta subunit.

It catalyses the reaction [N-(6-aminohexanoyl)]n + H2O = [N-(6-aminohexanoyl)]n-x + [N-(6-aminohexanoyl)]x.. The protein operates within xenobiotic degradation; nylon-6 oligomer degradation. Functionally, involved in the degradation of nylon-6 oligomers. Degrades cyclic and linear oligomers of 6-aminohexanoate (Ahx) with a degree of polymerization greater than three by an endo-type mode. Cannot use Ahx cyclic dimer or the Ahx linear dimer. The polypeptide is 6-aminohexanoate-oligomer endohydrolase (Paenarthrobacter ureafaciens).